Here is a 417-residue protein sequence, read N- to C-terminus: D-inositol 3-phosphate glycosyltransferase (417 aa).

His-10 provides a ligand contact to 1D-myo-inositol 3-phosphate. Residues 16-17 (QP) and Gly-24 contribute to the UDP-N-acetyl-alpha-D-glucosamine site. 1D-myo-inositol 3-phosphate is bound by residues 21-26 (DAGGMN), Lys-79, Tyr-112, Thr-136, and Arg-156. 3 residues coordinate UDP-N-acetyl-alpha-D-glucosamine: Arg-230, Lys-235, and Gln-296. The Mg(2+) site is built by Tyr-305, Arg-306, and Ala-308. Positions 318 and 326 each coordinate UDP-N-acetyl-alpha-D-glucosamine. Thr-332 contributes to the Mg(2+) binding site.

The protein belongs to the glycosyltransferase group 1 family. MshA subfamily. In terms of assembly, homodimer.

It catalyses the reaction 1D-myo-inositol 3-phosphate + UDP-N-acetyl-alpha-D-glucosamine = 1D-myo-inositol 2-acetamido-2-deoxy-alpha-D-glucopyranoside 3-phosphate + UDP + H(+). Catalyzes the transfer of a N-acetyl-glucosamine moiety to 1D-myo-inositol 3-phosphate to produce 1D-myo-inositol 2-acetamido-2-deoxy-glucopyranoside 3-phosphate in the mycothiol biosynthesis pathway. This chain is D-inositol 3-phosphate glycosyltransferase, found in Actinosynnema mirum (strain ATCC 29888 / DSM 43827 / JCM 3225 / NBRC 14064 / NCIMB 13271 / NRRL B-12336 / IMRU 3971 / 101).